Here is a 536-residue protein sequence, read N- to C-terminus: Uridine 5'-monophosphate transferase (536 aa).

Residues 22-84 form a disordered region; it reads ADHPTHTPED…GLQQCSSSPS (63 aa). Residues 31–45 are compositionally biased toward polar residues; the sequence is DSPQTVPSPRSSSAH. The segment covering 48-60 has biased composition (basic and acidic residues); sequence EIQELRSLQETRP. The span at 66 to 84 shows a compositional bias: polar residues; the sequence is RSQSRSSKHGLQQCSSSPS. LRR repeat units lie at residues 140 to 164, 165 to 189, 191 to 211, 212 to 234, 236 to 257, and 258 to 282; these read AGQAGTQLTLRDLNLSQLPPGLHRL, AHLRDLDVADNVNLTRLPEDLSLCK, LERINADGCSIAALPSKIGAL, KNLSEISLAFNELRTLPDSIGQC, SLTTIVVPGCKINKLPASLANL, and TQLKKLDVAANIELSELSPHMNLDD. The region spanning 377–533 is the Fido domain; that stretch reads ITLDRIFKLN…LEGIATVMNQ (157 aa).

The protein in the C-terminal section; belongs to the fic family. As to quaternary structure, interacts with several members of the Arabidopsis RLCK VIIa subfamily.

The protein resides in the secreted. The protein localises to the host cell. It is found in the host cell membrane. The enzyme catalyses L-seryl-[protein] + UTP = O-(5'-uridylyl)-L-seryl-[protein] + diphosphate. The catalysed reaction is L-threonyl-[protein] + UTP = uridylyl-L-threonyl-[protein] + diphosphate. Functionally, functions both as a virulence and an avirulence gene in Arabidopsis. Causes disease on the Kashmir (Kas) ecotype, but not on Columbia (Col-0) ecotype. Acts by directly uridylylating the conserved phosphorylation sites in the activation loop of a number of host receptor-like cytoplasmic protein kinases (RLCK), including BIK1, RIPK, PBL1 and PBL2, preventing the activation of these kinases and subsequent signal transduction. In susceptible Arabidopsis plants, uridylylation of BIK1 inhibits the PAMP-triggered immunity (PTI) signaling cascade and thereby promotes bacterial virulence. It also inhibits RPM1-dependent effector-triggered immunity (ETI) in mesophyll tissues by targeting RIPK. In contrast, in the resistant ecotype Col-0, xopAC is a major avirulence gene. Uridylylation of PBL2 triggers the PBL2-RKS1 interaction and thus the assembly of the PBL2-RKS1-ZAR1 complex, which, in turn, activates effector-triggered immunity (ETI) against X.campestris. This chain is Uridine 5'-monophosphate transferase, found in Xanthomonas campestris pv. campestris (strain 8004).